A 75-amino-acid polypeptide reads, in one-letter code: DNA-directed RNA polymerase subunit omega (75 aa).

The protein belongs to the RNA polymerase subunit omega family. In terms of assembly, in cyanobacteria the RNAP catalytic core is composed of 2 alpha, 1 beta, 1 beta', 1 gamma and 1 omega subunit. When a sigma factor is associated with the core the holoenzyme is formed, which can initiate transcription.

It carries out the reaction RNA(n) + a ribonucleoside 5'-triphosphate = RNA(n+1) + diphosphate. Its function is as follows. Promotes RNA polymerase assembly. Latches the N- and C-terminal regions of the beta' subunit thereby facilitating its interaction with the beta and alpha subunits. This chain is DNA-directed RNA polymerase subunit omega, found in Microcystis aeruginosa (strain NIES-843 / IAM M-2473).